The following is an 89-amino-acid chain: OMEGA-ectatommitoxin(02)-Rm1a (89 aa).

Residues 1–30 (MKDSYISIVIAYLMVTFILVSSMPIEGEKG) form the signal peptide. 3 cysteine pairs are disulfide-bonded: C39–C52, C47–C68, and C70–C79. Residues 43–80 (YANYCFNGKCVHVVAQDEPGKPCYSCICDKFYIGKRCG) form the EGF-like domain.

It belongs to the EGF domain peptide family. As to expression, expressed by the venom gland.

Its subcellular location is the secreted. Its function is as follows. Ant peptide with probable defensive activity which acts as a potent agonist of the mammalian epidermal growth factor receptor (EGFR). Mimics, both structurally and functionally, vertebrate epidermal growth factor (EGF) peptide hormones. In vivo, intraplantar injection in mice causes long-lasting (several days) hypersensitivity of the injected paw to both mechanical and thermal stimuli. Its long-lasting effect is unusual for venom toxins whose effects are usually immediate. One possible explanation is that it would reduce the duration of a nest attack, discourage future attacks, or enhance the actions of subsequent exposure to other pain-inducing venom peptides. In Rhytidoponera metallica (Australian green-headed ant), this protein is OMEGA-ectatommitoxin(02)-Rm1a.